We begin with the raw amino-acid sequence, 490 residues long: Adenylyltransferase and sulfurtransferase uba4 (490 aa).

The disordered stretch occupies residues 33-54 (EAAKTPPYSDSTETDRGSSSST). ATP-binding positions include Gly96, Asp117, 124–128 (SNLHR), Lys141, and 185–186 (DH). Zn(2+)-binding residues include Cys234 and Cys237. Cys251 functions as the Glycyl thioester intermediate; for adenylyltransferase activity in the catalytic mechanism. 2 residues coordinate Zn(2+): Cys323 and Cys326. One can recognise a Rhodanese domain in the interval 379–488 (EHGKPVLLDV…WKREVDSTLP (110 aa)). Cys443 serves as the catalytic Cysteine persulfide intermediate; for sulfurtransferase activity.

This sequence in the N-terminal section; belongs to the HesA/MoeB/ThiF family. UBA4 subfamily. The cofactor is Zn(2+).

It localises to the cytoplasm. Its subcellular location is the cytosol. It carries out the reaction [molybdopterin-synthase sulfur-carrier protein]-C-terminal Gly-Gly + ATP + H(+) = [molybdopterin-synthase sulfur-carrier protein]-C-terminal Gly-Gly-AMP + diphosphate. It catalyses the reaction [molybdopterin-synthase sulfur-carrier protein]-C-terminal Gly-Gly-AMP + S-sulfanyl-L-cysteinyl-[cysteine desulfurase] + AH2 = [molybdopterin-synthase sulfur-carrier protein]-C-terminal-Gly-aminoethanethioate + L-cysteinyl-[cysteine desulfurase] + A + AMP + 2 H(+). The protein operates within tRNA modification; 5-methoxycarbonylmethyl-2-thiouridine-tRNA biosynthesis. In terms of biological role, plays a central role in 2-thiolation of mcm(5)S(2)U at tRNA wobble positions of cytosolic tRNA(Lys), tRNA(Glu) and tRNA(Gln). Also essential during biosynthesis of the molybdenum cofactor. Acts by mediating the C-terminal thiocarboxylation of sulfur carriers URM1 and MOCS2A. Its N-terminus first activates urm1 and MOCS2A as acyl-adenylates (-COAMP), then the persulfide sulfur on the catalytic cysteine is transferred to URM1 and MOCS2A to form thiocarboxylation (-COSH) of their C-terminus. The reaction probably involves hydrogen sulfide that is generated from the persulfide intermediate and that acts as a nucleophile towards URM1 and MOCS2A. Subsequently, a transient disulfide bond is formed. Does not use thiosulfate as sulfur donor; NFS1 probably acting as a sulfur donor for thiocarboxylation reactions. The protein is Adenylyltransferase and sulfurtransferase uba4 of Pyricularia oryzae (strain 70-15 / ATCC MYA-4617 / FGSC 8958) (Rice blast fungus).